Consider the following 223-residue polypeptide: Uridylate kinase (223 aa).

Residue 9 to 10 (GS) participates in ATP binding. Gly43 serves as a coordination point for UMP. ATP contacts are provided by Gly44 and Arg48. Residues Asp65 and 112-118 (THPGHTT) each bind UMP. Residues Thr137, Asn138, Tyr143, and Asp146 each contribute to the ATP site.

Belongs to the UMP kinase family. As to quaternary structure, homohexamer.

The protein localises to the cytoplasm. The enzyme catalyses UMP + ATP = UDP + ADP. It functions in the pathway pyrimidine metabolism; CTP biosynthesis via de novo pathway; UDP from UMP (UMPK route): step 1/1. Inhibited by UTP. Its function is as follows. Catalyzes the reversible phosphorylation of UMP to UDP. The protein is Uridylate kinase of Methanopyrus kandleri (strain AV19 / DSM 6324 / JCM 9639 / NBRC 100938).